Reading from the N-terminus, the 130-residue chain is DNA-binding protein HU (130 aa).

This sequence belongs to the bacterial histone-like protein family.

Functionally, histone-like DNA-binding protein which is capable of wrapping DNA to stabilize it, and thus to prevent its denaturation under extreme environmental conditions. The chain is DNA-binding protein HU (hup) from Ureaplasma parvum serovar 3 (strain ATCC 700970).